A 397-amino-acid chain; its full sequence is Tyrosine--tRNA ligase (397 aa).

Positions 39–48 match the 'HIGH' region motif; it reads PTAPDLHLGH. A 'KMSKS' region motif is present at residues 223-227; sequence KMSKS. Residue Lys226 participates in ATP binding. The region spanning 334–395 is the S4 RNA-binding domain; that stretch reads YPIANLVHDL…GKRKFAKIRL (62 aa).

It belongs to the class-I aminoacyl-tRNA synthetase family. TyrS type 2 subfamily. As to quaternary structure, homodimer.

The protein localises to the cytoplasm. The catalysed reaction is tRNA(Tyr) + L-tyrosine + ATP = L-tyrosyl-tRNA(Tyr) + AMP + diphosphate + H(+). Functionally, catalyzes the attachment of tyrosine to tRNA(Tyr) in a two-step reaction: tyrosine is first activated by ATP to form Tyr-AMP and then transferred to the acceptor end of tRNA(Tyr). The chain is Tyrosine--tRNA ligase from Methylococcus capsulatus (strain ATCC 33009 / NCIMB 11132 / Bath).